We begin with the raw amino-acid sequence, 931 residues long: Adhesion G protein-coupled receptor E1 (931 aa).

Residues 1-27 (MWGFWLLLFWGFSGMYRWGMTTLPTLG) form the signal peptide. Residues 28 to 644 (QTLGGVNECQ…IMASGELTME (617 aa)) lie on the Extracellular side of the membrane. 2 consecutive EGF-like domains span residues 32-80 (GVNE…VECQ) and 81-132 (DVNE…FLCA). 21 disulfide bridges follow: C36-C48, C42-C57, C59-C79, C85-C98, C92-C107, C109-C131, C137-C149, C143-C158, C160-C171, C177-C189, C183-C198, C200-C220, C226-C239, C233-C248, C250-C270, C276-C286, C280-C295, C297-C317, C323-C336, C330-C345, and C347-C366. The EGF-like 3; calcium-binding domain occupies 133–172 (DVDECLTIGICPKYSNCSNSVGSYSCTCQPGFVLNGSICE). 2 N-linked (GlcNAc...) asparagine glycosylation sites follow: N148 and N167. In terms of domain architecture, EGF-like 4; calcium-binding spans 173–221 (DEDECVTRDVCPEHATCHNTLGSYYCTCNSGLESSGGGPMFQGLDESCE). The 50-residue stretch at 222–271 (DVDECSRNSTLCGPTFICINTLGSYSCSCPAGFSLPTFQILGHPADGNCT) folds into the EGF-like 5; calcium-binding domain. A glycan (N-linked (GlcNAc...) asparagine) is linked at N229. N-linked (GlcNAc...) asparagine glycosylation is found at N269 and N283. Residues 272-318 (DIDECDDTCPLNSSCTNTIGSYFCTCHPGFASSNGQLNFKDLEVTCE) form the EGF-like 6; calcium-binding domain. An EGF-like 7; calcium-binding domain is found at 319-367 (DIDECTQDPLQCGLNSVCTNVPGSYICGCLPDFQMDPEGSQGYGNFNCK). N-linked (GlcNAc...) asparagine glycosylation is found at N405, N417, N474, and N498. Residues 482–642 (EYLDIESKVI…AIIMASGELT (161 aa)) enclose the GAIN-B domain. Positions 506-508 (RGD) match the Cell attachment site motif. Cystine bridges form between C595–C624 and C612–C626. The tract at residues 595-642 (CVSWNTDVEDGRWTPSGCEIVEASETHTVCSCNRMANLAIIMASGELT) is GPS. The helical transmembrane segment at 645-672 (FSLYIISHVGTVISLVCLALAIATFLLC) threads the bilayer. Residues 673–679 (RAVQNHN) lie on the Cytoplasmic side of the membrane. The chain crosses the membrane as a helical span at residues 680-701 (TYMHLHLCVCLFLAKILFLTGI). Topologically, residues 702 to 711 (DKTDNQTACA) are extracellular. An N-linked (GlcNAc...) asparagine glycan is attached at N706. A helical transmembrane segment spans residues 712–735 (IIAGFLHYLFLACFFWMLVEAVML). Topologically, residues 736–754 (FLMVRNLKVVNYFSSRNIK) are cytoplasmic. Residues 755 to 776 (MLHLCAFGYGLPVLVVIISASV) traverse the membrane as a helical segment. Residues 777–792 (QPRGYGMHNRCWLNTE) lie on the Extracellular side of the membrane. A helical transmembrane segment spans residues 793 to 821 (TGFIWSFLGPVCMIITINSVLLAWTLWVL). Topologically, residues 822-839 (RQKLCSVSSEVSKLKDTR) are cytoplasmic. The chain crosses the membrane as a helical span at residues 840–859 (LLTFKAIAQIFILGCSWVLG). Over 860 to 874 (IFQIGPLASIMAYLF) the chain is Extracellular. The chain crosses the membrane as a helical span at residues 875–897 (TIINSLQGAFIFLIHCLLNRQVR). Residues 898–931 (DEYKKLLTRKTDLSSHSQTSGILLSSMPSTSKMG) are Cytoplasmic-facing.

This sequence belongs to the G-protein coupled receptor 2 family. Adhesion G-protein coupled receptor (ADGR) subfamily. In macrophages; but absent from those which are localized within T-cell areas of lymph nodes and spleen. Low level of expression on blood monocytes.

It is found in the cell membrane. Orphan receptor involved in cell adhesion and probably in cell-cell interactions specifically involving cells of the immune system. May play a role in regulatory T-cells (Treg) development. This Mus musculus (Mouse) protein is Adhesion G protein-coupled receptor E1 (Adgre1).